The following is a 105-amino-acid chain: Integration host factor subunit alpha (105 aa).

It belongs to the bacterial histone-like protein family. Heterodimer of an alpha and a beta chain.

In terms of biological role, this protein is one of the two subunits of integration host factor, a specific DNA-binding protein that functions in genetic recombination as well as in transcriptional and translational control. The polypeptide is Integration host factor subunit alpha (Xanthobacter autotrophicus (strain ATCC BAA-1158 / Py2)).